The following is a 274-amino-acid chain: Thiamine kinase (274 aa).

The protein belongs to the thiamine kinase family.

It catalyses the reaction thiamine + ATP = thiamine phosphate + ADP + H(+). The protein operates within cofactor biosynthesis; thiamine diphosphate biosynthesis; thiamine phosphate from thiamine: step 1/1. Catalyzes the ATP-dependent phosphorylation of thiamine to thiamine phosphate. Is involved in thiamine salvage. In Escherichia coli O157:H7, this protein is Thiamine kinase.